The sequence spans 119 residues: Large ribosomal subunit protein bL20 (119 aa).

It belongs to the bacterial ribosomal protein bL20 family.

Binds directly to 23S ribosomal RNA and is necessary for the in vitro assembly process of the 50S ribosomal subunit. It is not involved in the protein synthesizing functions of that subunit. This is Large ribosomal subunit protein bL20 from Xylella fastidiosa (strain 9a5c).